Reading from the N-terminus, the 563-residue chain is Arginine--tRNA ligase (563 aa).

The 'HIGH' region motif lies at Pro-121–His-131.

It belongs to the class-I aminoacyl-tRNA synthetase family. Monomer.

Its subcellular location is the cytoplasm. It carries out the reaction tRNA(Arg) + L-arginine + ATP = L-arginyl-tRNA(Arg) + AMP + diphosphate. The chain is Arginine--tRNA ligase from Leuconostoc mesenteroides subsp. mesenteroides (strain ATCC 8293 / DSM 20343 / BCRC 11652 / CCM 1803 / JCM 6124 / NCDO 523 / NBRC 100496 / NCIMB 8023 / NCTC 12954 / NRRL B-1118 / 37Y).